A 107-amino-acid chain; its full sequence is EMBRYO SURROUNDING FACTOR 1-like protein 5 (107 aa).

The first 22 residues, 1 to 22 (MSLLRFAILCIIFVSLFGVHEC), serve as a signal peptide directing secretion. Intrachain disulfides connect C35/C49, C40/C69, C47/C65, and C50/C58. Residues 87–107 (GLGPPIYLFFLGQFIYFVLGL) traverse the membrane as a helical segment.

The protein belongs to the MEG family. In terms of tissue distribution, expressed in flowers.

Its subcellular location is the membrane. The polypeptide is EMBRYO SURROUNDING FACTOR 1-like protein 5 (ESFL5) (Arabidopsis thaliana (Mouse-ear cress)).